A 62-amino-acid chain; its full sequence is Teretoxin Tan1.1 (62 aa).

A signal peptide spans 1–21 (MSCFPVLFVMMLLVSQSVWAF). The propeptide occupies 22 to 38 (PGPETRDGSVQDAESRR).

The protein belongs to the teretoxin A (TA) superfamily. Post-translationally, contains 2 disulfide bonds. As to expression, expressed by the venom duct.

The protein localises to the secreted. This is Teretoxin Tan1.1 from Terebra anilis (Auger snail).